The following is a 1156-amino-acid chain: Nuclear pore complex protein Nup133 (1156 aa).

Methionine 1 bears the N-acetylmethionine mark. Residues 1–39 are disordered; that stretch reads MFPAAPSPRTPGTGSRRGPLAGLGPGSTPRTASRKGLPL. A phosphoserine mark is found at serine 7 and serine 15. Omega-N-methylarginine is present on arginine 17. Serine 27 carries the phosphoserine modification. Threonine 28 bears the Phosphothreonine mark. Arginine 30 is modified (omega-N-methylarginine). A phosphoserine mark is found at serine 41, serine 45, serine 50, serine 72, serine 131, serine 480, serine 489, serine 493, serine 501, and serine 755. N6-acetyllysine is present on lysine 787. Residue serine 1133 is modified to Phosphoserine.

The protein belongs to the nucleoporin Nup133 family. In terms of assembly, forms part of the Nup160 subcomplex in the nuclear pore which is composed of NUP160, NUP133, NUP107 and Nup96. This complex plays a role in RNA export and in tethering Nup98 and NUP153 to the nucleus. Widely expressed in fetal and adult tissues. Expressed in the brain and kidney.

It localises to the nucleus. The protein localises to the nuclear pore complex. It is found in the chromosome. Its subcellular location is the centromere. The protein resides in the kinetochore. In terms of biological role, involved in poly(A)+ RNA transport. Involved in nephrogenesis. This Homo sapiens (Human) protein is Nuclear pore complex protein Nup133 (NUP133).